Consider the following 155-residue polypeptide: Small ribosomal subunit protein uS7c (155 aa).

It belongs to the universal ribosomal protein uS7 family. Part of the 30S ribosomal subunit.

It is found in the plastid. Its function is as follows. One of the primary rRNA binding proteins, it binds directly to 16S rRNA where it nucleates assembly of the head domain of the 30S subunit. This Aneura mirabilis (Parasitic liverwort) protein is Small ribosomal subunit protein uS7c (rps7).